The sequence spans 34 residues: DCTRMFGACRRDSDCCPHLGCKPTSKYCAWDGTI.

3 cysteine pairs are disulfide-bonded: cysteine 2/cysteine 16, cysteine 9/cysteine 21, and cysteine 15/cysteine 28. At isoleucine 34 the chain carries Isoleucine amide.

It belongs to the neurotoxin 10 (Hwtx-1) family. 57 (ScTx1) subfamily. As to expression, expressed by the venom gland.

The protein resides in the secreted. Acts as a gating-modifier to inhibit voltage-gated potassium channels. It inhibits delayed Kv2.1/KCNB1 (IC(50) is 12.7 nM), Kv2.1/Kv9.3 (IC(50) is 7.2 nM) (KCNB1/KCNS3), Kv2.2/KCNB2 (IC(50) is 21.4 nM), and transient Kv4.2/KCND2 (IC(50) is 1.2 nM) channels. This Stromatopelma calceatum (Featherleg baboon tarantula) protein is Kappa-theraphotoxin-Sc1a.